Here is a 2843-residue protein sequence, read N- to C-terminus: Adenomatous polyposis coli protein (2843 aa).

Alanine 2 carries the post-translational modification N-acetylalanine. Residues 2 to 61 (AAASYDQLLKQVEALKMENSNLRQELEDNSNHLTKLETEASNMKEVLKQLQGSIEDEAMA) are a coiled coil. Phosphoserine is present on residues serine 107 and serine 111. The stretch at 127 to 248 (SRESTGYLEE…ATEAERSSQN (122 aa)) forms a coiled coil. The interval 239–305 (ATEAERSSQN…STHSAPRRLT (67 aa)) is disordered. Positions 241-261 (EAERSSQNKHETGSHDAERQN) are enriched in basic and acidic residues. Residues 271 to 282 (MATSGNGQGSTT) are compositionally biased toward polar residues. The segment covering 290–299 (SVLSSSSTHS) has biased composition (low complexity). ARM repeat units follow at residues 453–495 (LMKL…HYSI), 505–547 (LTNL…IASV), 548–591 (LRNL…VLSA), 592–638 (LWNL…GGGI), 639–683 (LRNV…ACGT), 684–725 (LWNL…SAAA), and 726–767 (LRNL…LDAQ). Phosphoserine occurs at positions 744, 748, and 780. Residues 828–878 (TTVLPSSSSSRGSLDSSRSEKDRSLERERGIGLGNYHPATENPGTSSKRGL) are disordered. Residues 833–843 (SSSSSRGSLDS) are compositionally biased toward low complexity. Over residues 844–857 (SRSEKDRSLERERG) the composition is skewed to basic and acidic residues. Residues 869-878 (NPGTSSKRGL) are compositionally biased toward polar residues. Serine 908 is subject to Phosphoserine. Disordered regions lie at residues 923 to 943 (RRSS…SENS) and 958 to 987 (RSSN…ESYS). The span at 927–943 (AAHTHSNTYNFTKSENS) shows a compositional bias: polar residues. The responsible for down-regulation through a process mediated by direct ubiquitination stretch occupies residues 960–1337 (SNDSLNSVSS…QHPRTKSSRL (378 aa)). A compositionally biased stretch (low complexity) spans 961–971 (NDSLNSVSSSD). 3 positions are modified to phosphoserine: serine 987, serine 1038, and serine 1042. Residues 1020-1169 (ELDTPINYSL…TNYSIKYNEE (150 aa)) form an interaction with catenins region. 3 disordered regions span residues 1099 to 1169 (VSPY…YNEE), 1190 to 1244 (SQKQ…GQPQ), and 1311 to 1376 (IGTR…PEHY). The segment covering 1107–1130 (ANGSETNRVGSNHGINQNVSQSLC) has biased composition (polar residues). Residues 1146-1159 (RYSEEEQHEEEERP) are compositionally biased toward basic and acidic residues. Residues 1190 to 1224 (SQKQSFSFSKSSSGQSSKTEHMSSSSENTSTPSSN) are compositionally biased toward low complexity. The segment covering 1225 to 1244 (AKRQNQLHPSSAQSRSGQPQ) has biased composition (polar residues). 2 stretches are compositionally biased toward low complexity: residues 1335–1345 (SRLQGSSLSSE) and 1355–1366 (SSGAKSPSKSGA). 5 positions are modified to phosphoserine: serine 1360, serine 1371, serine 1385, serine 1392, and serine 1395. Disordered regions lie at residues 1403–1475 (SSVQ…VNAA), 1526–1569 (PPVQ…DSDD), 1583–1611 (MPTK…KPSQ), 1664–1717 (SPPN…DDNK), and 1729–1836 (NSAM…RVRG). Phosphothreonine is present on threonine 1438. Basic and acidic residues-rich tracts occupy residues 1448–1466 (TKRE…RESG) and 1540–1564 (EQPK…KDLL). The residue at position 1567 (serine 1567) is a Phosphoserine. Positions 1683-1698 (EFEKRDTIPTEGRSTD) are enriched in basic and acidic residues. The span at 1735 to 1744 (GKSHKPFRVK) shows a compositional bias: basic residues. Serine 1774 is subject to Phosphoserine. 2 stretches are compositionally biased toward basic and acidic residues: residues 1785–1794 (YRTRVRKNAD) and 1804–1813 (VFSDNKDSKK). 3 positions are modified to phosphoserine: serine 1861, serine 1863, and serine 1864. Positions 1866–1893 (DFDDDDVDLSREKAELRKAKENKESEAK) are highly charged. The segment covering 1881–1896 (LRKAKENKESEAKVTS) has biased composition (basic and acidic residues). Disordered stretches follow at residues 1881 to 1950 (LRKA…TDEK), 1965 to 2011 (HNSS…APKS), and 2043 to 2072 (ISSA…GGIL). Composition is skewed to polar residues over residues 1897 to 1913 (HTEL…TQAI) and 1928 to 1938 (QKQSTFPQSSK). Over residues 1939–1950 (DIPDRGAATDEK) the composition is skewed to basic and acidic residues. Serine 1971 and serine 1973 each carry phosphoserine. Positions 1979–1991 (NNNKENEPIKETE) are enriched in basic and acidic residues. The segment at 2035–2059 (EDDLLQECISSAMPKKKKPSRLKGD) is interaction with AXIN1. A phosphoserine mark is found at serine 2088, serine 2093, serine 2125, serine 2129, serine 2130, and serine 2132. 2 disordered regions span residues 2147–2635 (PFHL…SGAT) and 2667–2714 (NNPR…VPMR). The residue at position 2151 (threonine 2151) is a Phosphothreonine. The segment at 2167-2674 (ILKPGEKSTL…PINNPRSGRS (508 aa)) is basic region. The span at 2169–2187 (KPGEKSTLETKKIESESKG) shows a compositional bias: basic and acidic residues. Composition is skewed to polar residues over residues 2203–2223 (VRSN…NMPS) and 2257–2271 (ASKS…TTSP). 3 positions are modified to phosphoserine: serine 2260, serine 2270, and serine 2283. Positions 2286–2331 (ARQTSQIGGSSKAPSRSGSRDSTPSRPAQQPLSRPIQSPGRNSISP) are enriched in polar residues. Residues 2348 to 2369 (TSSPSTASTKSSGSGKMSYTSP) show a composition bias toward low complexity. Composition is skewed to polar residues over residues 2370–2409 (GRQM…NGNG) and 2418–2427 (RMSSTKSSGS). Over residues 2459–2477 (SASFESLSPSSRPASPTRS) the composition is skewed to low complexity. Residues serine 2473 and serine 2535 each carry the phosphoserine modification. Positions 2475 to 2843 (TRSQAQTPVL…HSGSYLVTSV (369 aa)) are interaction with DLG1. The segment covering 2518 to 2535 (NDGRPAKRHDIARSHSES) has biased composition (basic and acidic residues). Polar residues predominate over residues 2555-2568 (SSSLPRVSTWRRTG). Phosphoserine is present on serine 2569. The span at 2569 to 2579 (SSSSILSASSE) shows a compositional bias: low complexity. Positions 2580 to 2592 (SSEKAKSEDEKHV) are enriched in basic and acidic residues. Polar residues-rich tracts occupy residues 2593–2608 (NSIS…QVSA), 2620–2635 (FSPT…SGAT), and 2668–2679 (NPRSGRSPTGNT). A phosphoserine mark is found at serine 2671 and serine 2674. Residues 2674 to 2843 (SPTGNTPPVI…HSGSYLVTSV (170 aa)) form an interaction with MAPRE1 region. Threonine 2679 bears the Phosphothreonine mark. A phosphoserine mark is found at serine 2710 and serine 2724. The interval 2729-2843 (DAPDQKGTEI…HSGSYLVTSV (115 aa)) is disordered. Residues 2741–2757 (GQNNPVPVSETNESSIV) show a composition bias toward polar residues. Over residues 2763 to 2774 (SSSSSSKHSSPS) the composition is skewed to low complexity. The segment covering 2784-2812 (FNYNPSPRKSSADSTSARPSQIPTPVNNN) has biased composition (polar residues). Phosphoserine is present on serine 2789. A Microtubule tip localization signal motif is present at residues 2803–2806 (SQIP). The short motif at 2841 to 2843 (TSV) is the PDZ-binding element.

It belongs to the adenomatous polyposis coli (APC) family. As to quaternary structure, forms homooligomers. Found in a complex consisting of ARHGEF4, APC and CTNNB1. Found in a complex composed of MACF1, APC, AXIN1, CTNNB1 and GSK3B. The complex composed, at least, of APC, CTNNB1 and GSK3B interacts with JPT1; the interaction requires the inactive form of GSK3B (phosphorylated at 'Ser-9'). Interacts with APC2. Interacts with DLG1 (via PDZ domains) and DLG3 (via PDZ domains). Interacts with alpha- and beta-catenins. Interacts with AXIN1 (via RGS domain). Interacts with ARHGEF4 (via N-terminus). Interacts (via C-terminal residues 2674-2843) with MAPRE1 (via C-terminal residues 206-211); the interaction inhibits association with and bundling of F-actin. Interacts with MAPRE2 and MAPRE3 (via C-terminus). Interacts with DIAPH1; DIAPH1 acts as a scaffold protein for MAPRE1 and APC to stabilize microtubules and promote cell migration. Interacts with DIAPH2. Interacts with SCRIB; may mediate APC targeting to adherens junctions of epithelial cells. Interacts with SPATA13 (via N-terminus and SH3 domain). Interacts with ASAP1 (via SH3 domain). Interacts (at the cell membrane) with AMER1 and AMER2 (via ARM repeats). Interacts with KHDRBS1. Interacts with actin; binds both to F-actin and actin filament bundles. Post-translationally, phosphorylated; phosphorylation enhances the F-actin bundling activity. Phosphorylated by GSK3B. Ubiquitinated, leading to its degradation by the proteasome. Ubiquitination is facilitated by Axin. Deubiquitinated by ZRANB1/TRABID. Expressed in a variety of tissues: brain, small intestine, colon, thymus, skeletal muscle, heart, prostate, lung, spleen, ovary, testis kidney, placenta, blood and liver. Isoform 1A: Very strongly expressed in brain but has relatively low expression levels in other tissues. Isoform 1B: Predominant form in all tissues except for brain, including gastric mucosa and blood.

The protein resides in the cell junction. It is found in the adherens junction. Its subcellular location is the cytoplasm. The protein localises to the cytoskeleton. It localises to the cell projection. The protein resides in the lamellipodium. It is found in the ruffle membrane. Its subcellular location is the cell membrane. Its function is as follows. Tumor suppressor. Promotes rapid degradation of CTNNB1 and participates in Wnt signaling as a negative regulator. APC activity is correlated with its phosphorylation state. Activates the GEF activity of SPATA13 and ARHGEF4. Plays a role in hepatocyte growth factor (HGF)-induced cell migration. Required for MMP9 up-regulation via the JNK signaling pathway in colorectal tumor cells. Associates with both microtubules and actin filaments, components of the cytoskeleton. Plays a role in mediating the organization of F-actin into ordered bundles. Functions downstream of Rho GTPases and DIAPH1 to selectively stabilize microtubules. Acts as a mediator of ERBB2-dependent stabilization of microtubules at the cell cortex. It is required for the localization of MACF1 to the cell membrane and this localization of MACF1 is critical for its function in microtubule stabilization. In Homo sapiens (Human), this protein is Adenomatous polyposis coli protein.